Reading from the N-terminus, the 862-residue chain is Piwi-like protein 1 (862 aa).

Positions 1-13 are enriched in basic residues; sequence MTGRARARARGRA. Residues 1–48 form a disordered region; sequence MTGRARARARGRARGQETVQHVGAAASQQPGYIPPRPQQSPTEGDLVG. Position 14 is an omega-N-methylarginine; by PRMT5; alternate (R14). R14 is subject to Symmetric dimethylarginine; by PRMT5; alternate. Position 49 is an omega-N-methylarginine; by PRMT5 (R49). R53 carries the omega-N-methylarginine; alternate modification. R53 carries the symmetric dimethylarginine; alternate modification. A D-box motif is present at residues 218–225; that stretch reads RRLLKIMN. Positions 279–392 constitute a PAZ domain; that stretch reads TVLDFMFNLY…LIPELCYLTG (114 aa). Residues 317 to 319 are required for binding 2'-O-methylated 3'-end of piRNAs; it reads TYR. An Omega-N-methylarginine; by PRMT5 modification is found at R371. Residues 480 to 616 are MID region; it reads SKETRGAPLI…LQMNCKMGGE (137 aa). Residues 556–848 form the Piwi domain; sequence IVVCLLSSNR…LAFLVGQSIH (293 aa). Active-site residues include D633, E671, D703, and H837.

This sequence belongs to the argonaute family. Piwi subfamily. As to quaternary structure, interacts (via Piwi domain) with DICER1, suggesting that it forms ribonucleoprotein RISC complexes; this interaction is regulated by HSP90AB1 activity. Interacts with MAEL, KIF17, PABPC1, PRMT5 and WDR77. Interacts (when methylated on arginine residues) with TDRD1, TDRKH/TDRD2, RNF17/TDRD4, TDRD6, TDRD7 and TDRD9. Interacts with CLOCK. Interacts with MOV10L1. Interacts with ANAPC10; interaction oly takes place following piRNA-binding. Interacts with RNF8; leading to sequester RNF8 in the cytoplasm. Interacts with Tex19.1 and, probably, Tex19.2. Mg(2+) is required as a cofactor. Ubiquitinated by the anaphase promoting complex/cyclosome (APC/C) in late spermatids, leading to its degradation. Ubiquitination only takes place following piRNA-binding in adult testis. Ubiquitination and degradation in late spermatogenesis by APC/C is probably required to release RNF8 from the cytoplasm and promote histone to protamine exchange by RNF8. In terms of processing, arginine methylation by PRMT5 is required for the interaction with Tudor domain-containing protein (TDRD1, TDRKH/TDRD2, RNF17/TDRD4, TDRD6, TDRD7 and TDRD9) and subsequent localization to the meiotic nuage, also named P granule. In terms of tissue distribution, expressed in brain. Expressed in testis, specifically in spermatocytes (at protein level). Only detected in germ lineage cells of adult testis. Expressed in male gonads 2 weeks after birth at the initiation of spermatogenesis, but not expressed in female gonads.

It localises to the cytoplasm. Endoribonuclease that plays a central role in postnatal germ cells by repressing transposable elements and preventing their mobilization, which is essential for the germline integrity. Acts via the piRNA metabolic process, which mediates the repression of transposable elements during meiosis by forming complexes composed of piRNAs and Piwi proteins and governs the methylation and subsequent repression of transposons. Directly binds methylated piRNAs, a class of 24 to 30 nucleotide RNAs that are generated by a Dicer-independent mechanism and are primarily derived from transposons and other repeated sequence elements. Strongly prefers a uridine in the first position of their guide (g1U preference, also named 1U-bias). Not involved in the piRNA amplification loop, also named ping-pong amplification cycle. Acts as an endoribonuclease that cleaves transposon messenger RNAs. Besides their function in transposable elements repression, piRNAs are probably involved in other processes during meiosis such as translation regulation. Probable component of some RISC complex, which mediates RNA cleavage and translational silencing. Also plays a role in the formation of chromatoid bodies and is required for some miRNAs stability. Required to sequester RNF8 in the cytoplasm until late spermatogenesis; RNF8 being released upon ubiquitination and degradation of PIWIL1. The protein is Piwi-like protein 1 of Mus musculus (Mouse).